Consider the following 100-residue polypeptide: Urease subunit gamma (100 aa).

The protein belongs to the urease gamma subunit family. As to quaternary structure, heterotrimer of UreA (gamma), UreB (beta) and UreC (alpha) subunits. Three heterotrimers associate to form the active enzyme.

The protein localises to the cytoplasm. The catalysed reaction is urea + 2 H2O + H(+) = hydrogencarbonate + 2 NH4(+). It participates in nitrogen metabolism; urea degradation; CO(2) and NH(3) from urea (urease route): step 1/1. The polypeptide is Urease subunit gamma (Magnetococcus marinus (strain ATCC BAA-1437 / JCM 17883 / MC-1)).